Consider the following 785-residue polypeptide: Protein SEY1 (785 aa).

The interval 1 to 31 (MASAAPINLRAQDTPYVPPTSLPTSSSQTGS) is disordered. Residues 1–689 (MASAAPINLR…KRSTVASIAQ (689 aa)) are Cytoplasmic-facing. Residues 22–31 (LPTSSSQTGS) are compositionally biased toward low complexity. One can recognise a GB1/RHD3-type G domain in the interval 61–281 (GFSYNIVAVF…SSDYLFKPAY (221 aa)). 71-78 (GSQSTGKS) is a GTP binding site. The stretch at 458–482 (SWEEELELLRDEIRAVADQCRKDET) forms a coiled coil. A helical transmembrane segment spans residues 690-710 (IPYWIYGVLVVLGWNEAMLVL). The Lumenal segment spans residues 711–713 (FNP). Residues 714–734 (LYFAFLLLAMATSYIIAQLGL) form a helical membrane-spanning segment. The Cytoplasmic portion of the chain corresponds to 735–785 (VGPLFQVTRTVGSEIQRQATARLREHFSQPVLAEPVQVGPSRDREEVGQIQ).

It belongs to the TRAFAC class dynamin-like GTPase superfamily. GB1/RHD3 GTPase family. RHD3 subfamily.

It is found in the endoplasmic reticulum membrane. Cooperates with the reticulon proteins and tubule-shaping DP1 family proteins to generate and maintain the structure of the tubular endoplasmic reticulum network. Has GTPase activity, which is required for its function in ER organization. The sequence is that of Protein SEY1 from Laccaria bicolor (strain S238N-H82 / ATCC MYA-4686) (Bicoloured deceiver).